A 326-amino-acid polypeptide reads, in one-letter code: Adenosine receptor A1 (326 aa).

The Extracellular portion of the chain corresponds to 1-10; it reads MPHSVSAFQA. Residues 11–33 traverse the membrane as a helical segment; the sequence is AYIGIEVLIALVSVPGNVLVIWA. Topologically, residues 34–46 are cytoplasmic; that stretch reads VKVNQALRDATFC. The chain crosses the membrane as a helical span at residues 47 to 69; that stretch reads FIASLAVADVAVGALVIPLAILI. Over 70 to 80 the chain is Extracellular; that stretch reads NIGPQTYFHTC. A disulfide bridge connects residues Cys80 and Cys169. Residues 81-102 traverse the membrane as a helical segment; sequence LMVACPVLILTQSSILALLAIA. The Cytoplasmic portion of the chain corresponds to 103 to 123; sequence VDRYLRVKIPLRYKTVVTPRR. Residues 124–146 traverse the membrane as a helical segment; that stretch reads AAVAIAGCWILSLVVGLTPMFGW. The Extracellular portion of the chain corresponds to 147–176; that stretch reads NNLSKIEMAWAANGSVGEPVIKCEFEKVIS. N-linked (GlcNAc...) asparagine glycosylation is present at Asn159. The helical transmembrane segment at 177–201 threads the bilayer; sequence MEYMVYFNFFVWVLPPLLLMVLIYL. At 202–235 the chain is on the cytoplasmic side; sequence EVFYLIRKQLSKKVSASSGDPQKYYGKELKIAKS. The chain crosses the membrane as a helical span at residues 236 to 259; sequence LALILFLFALSWLPLHILNCITLF. Residues 260–267 are Extracellular-facing; sequence CPTCHKPT. The helical transmembrane segment at 268-292 threads the bilayer; the sequence is ILTYIAIFLTHGNSAMNPIVYAFRI. The Cytoplasmic segment spans residues 293-326; that stretch reads QKFRVTFLKIWNDHFRCQPEPPIDEDLPEEKVDD. Residue Cys309 is the site of S-palmitoyl cysteine attachment.

This sequence belongs to the G-protein coupled receptor 1 family.

The protein localises to the cell membrane. Its function is as follows. Receptor for adenosine. The activity of this receptor is mediated by G proteins which inhibit adenylyl cyclase. This Cavia porcellus (Guinea pig) protein is Adenosine receptor A1 (ADORA1).